The following is a 260-amino-acid chain: Proteasome subunit alpha (260 aa).

The span at 237 to 248 (ASTDAPAAAADS) shows a compositional bias: low complexity. A disordered region spans residues 237-260 (ASTDAPAAAADSADVEERPDSEAP). The span at 251–260 (VEERPDSEAP) shows a compositional bias: basic and acidic residues.

This sequence belongs to the peptidase T1A family. The 20S proteasome core is composed of 14 alpha and 14 beta subunits that assemble into four stacked heptameric rings, resulting in a barrel-shaped structure. The two inner rings, each composed of seven catalytic beta subunits, are sandwiched by two outer rings, each composed of seven alpha subunits. The catalytic chamber with the active sites is on the inside of the barrel. Has a gated structure, the ends of the cylinder being occluded by the N-termini of the alpha-subunits. Is capped by the proteasome-associated ATPase, ARC.

The protein localises to the cytoplasm. Its pathway is protein degradation; proteasomal Pup-dependent pathway. With respect to regulation, the formation of the proteasomal ATPase ARC-20S proteasome complex, likely via the docking of the C-termini of ARC into the intersubunit pockets in the alpha-rings, may trigger opening of the gate for substrate entry. Interconversion between the open-gate and close-gate conformations leads to a dynamic regulation of the 20S proteasome proteolysis activity. Functionally, component of the proteasome core, a large protease complex with broad specificity involved in protein degradation. This is Proteasome subunit alpha from Salinispora tropica (strain ATCC BAA-916 / DSM 44818 / JCM 13857 / NBRC 105044 / CNB-440).